A 529-amino-acid chain; its full sequence is Calcium/calmodulin-dependent protein kinase type II subunit gamma (529 aa).

In terms of domain architecture, Protein kinase spans 14–272 (YQLFEELGKG…ADQALKHPWV (259 aa)). ATP contacts are provided by residues 20-28 (LGKGAFSVV) and Lys-43. Catalysis depends on Asp-136, which acts as the Proton acceptor. Positions 283–292 (HRQETVECLR) are autoinhibitory domain. Phosphothreonine; by autocatalysis occurs at positions 287, 306, and 307. The calmodulin-binding stretch occupies residues 294-316 (FNARRKLKGAILTTMLVSRNFSA). Phosphoserine occurs at positions 311, 334, 349, 352, and 455. A disordered region spans residues 324-353 (KSDGGVKKRKSSSSVHLMPQSNNKNSLVSP). The span at 342 to 352 (PQSNNKNSLVS) shows a compositional bias: polar residues.

The protein belongs to the protein kinase superfamily. CAMK Ser/Thr protein kinase family. CaMK subfamily. As to quaternary structure, CAMK2 is composed of 4 different chains: alpha (CAMK2A), beta (CAMK2B), gamma (CAMK2G), and delta (CAMK2D). The different isoforms assemble into homo- or heteromultimeric holoenzymes composed of 12 subunits with two hexameric rings stacked one on top of the other. In terms of processing, autophosphorylation of Thr-287 following activation by Ca(2+)/calmodulin. Phosphorylation of Thr-287 locks the kinase into an activated state.

The protein localises to the sarcoplasmic reticulum membrane. It carries out the reaction L-seryl-[protein] + ATP = O-phospho-L-seryl-[protein] + ADP + H(+). The catalysed reaction is L-threonyl-[protein] + ATP = O-phospho-L-threonyl-[protein] + ADP + H(+). Activated by Ca(2+)/calmodulin. Binding of calmodulin results in conformational change that relieves intrasteric autoinhibition and allows autophosphorylation of Thr-287 which turns the kinase in a constitutively active form and confers to the kinase a Ca(2+)-independent activity. In terms of biological role, calcium/calmodulin-dependent protein kinase that functions autonomously after Ca(2+)/calmodulin-binding and autophosphorylation, and is involved in sarcoplasmic reticulum Ca(2+) transport in skeletal muscle and may function in dendritic spine and synapse formation and neuronal plasticity. In slow-twitch muscles, is involved in regulation of sarcoplasmic reticulum (SR) Ca(2+) transport and in fast-twitch muscle participates in the control of Ca(2+) release from the SR through phosphorylation of the ryanodine receptor-coupling factor triadin. In the central nervous system, it is involved in the regulation of neurite formation and arborization. It may participate in the promotion of dendritic spine and synapse formation and maintenance of synaptic plasticity which enables long-term potentiation (LTP) and hippocampus-dependent learning. In response to interferon-gamma (IFN-gamma) stimulation, catalyzes phosphorylation of STAT1, stimulating the JAK-STAT signaling pathway. The sequence is that of Calcium/calmodulin-dependent protein kinase type II subunit gamma (Camk2g) from Mus musculus (Mouse).